We begin with the raw amino-acid sequence, 538 residues long: MDFGGILLHLEARSMATVLIAGLLVYWVGSAIFLAVLHPLAKFPGPKLAAASDWWLVYHEWFLGKSLTDILFDLHQNYGTINVPYGGLQDLWLDMDRIAYVVQSLTWESALEANSLVKLHFSSMQAYSDIYNVKSKWDKDPEVYKAIVDTSSAFGLRNYHEAKERRDLIWPFYSRQSVQRMQKAINRQISFLVDQLDKQNQEGKLSNMSMAFRCLAQDIMADICLGKSFGTLEERDFGSPLIHALDEGLESYVLMKSFPTLRNILYSISAMVTLPGEAEFATYGTIVADHVTRGIQQPDTIPPNTMLGFLVPTSSNTAKEAPQPKLSQGHMTEELQTFVIGAGETVASAMVQGLSGILQSPDLYKNVYEEIVQVWPETDGPVPPIEVLEKLPLLTAVIKEALRLTHGVVTPLARVISAGGACIDGHHVPGGTSVGTSHVFIHMSSDYYDAPDEFRPERWLGSSSDKHLVAFSKGPRGCMGINLAWCQLYLVLATLVRTVQMEYPADLNDIKIKWKDCFQPLYYGRPLQVRCTRAEGHS.

The chain crosses the membrane as a helical span at residues 17-37 (TVLIAGLLVYWVGSAIFLAVL). Cys-478 contributes to the heme binding site.

Belongs to the cytochrome P450 family. Heme is required as a cofactor.

The protein localises to the membrane. It carries out the reaction pre-flavunoidine + reduced [NADPH--hemoprotein reductase] + O2 = 10-hydroxy-pre-flavunoidine + oxidized [NADPH--hemoprotein reductase] + H2O + H(+). The protein operates within secondary metabolite biosynthesis; terpenoid biosynthesis. Cytochrome P450 monooxygenase; part of the gene cluster that mediates the biosynthesis of flavunoidine, an alkaloidal terpenoid with a tetracyclic cage-like core connected to dimethylcadaverine via a C-N bond and acylated with 5,5-dimethyl-L-pipecolate. The tetracyclic core is synthesized by the terpene cyclase flvE and the cytochrome P450 monooxygenase flvD. The terpene cyclase flvE catalyzes the cyclization of farnesyl pyrophosphate (FPP) to form (1R,4R,5S)-(+)-acoradiene and the cytochrome P450 monooxygenase flvD is then responsible for oxidative conversion of (1R,4R,5S)-(+)-acoradiene into the tetracyclic cage present in the final product flavunoidine. In parallel, the N-methyltransferase flvH dimethylates L-lysine to give N,N-dimethyl-L-Lysin which is decarboxylated by flvG to afford dimethylcadaverine. The terpene cyclase-like protein flvF is the enzyme that attaches the dimethylcadaverine precusor at the C-7 of the tetracyclic cage to yield pre-flavunoidine. The cytochrome monooxygenase flvC hydroxylates the C-10 position of pre-flavunoidine whereas the NRPS flvI acylates the terpenoid core at the hydroxylated C-10 with dimethylpipecolate to yield final flavunoidine. The bifunctional enzyme flvA and the dehydrogenase flvB are responsible for the synthesis of the dimethylpipecolate precursor. The PLP-dependent lyase domain of flvA might use L-O-acetyl-homoserine and alpha-keto-isovalerate to form an intermediary ketone that can cyclize intramolecularly to yield an imine. The imine can be reduced by flvB to yield the 6-carboxylated pipecolate. The C-terminal alpha-KG-dependent oxygenase domain of flvA is then proposed to catalyze the decarboxylation to yield dimethylpipecolate. This Aspergillus flavus (strain ATCC 200026 / FGSC A1120 / IAM 13836 / NRRL 3357 / JCM 12722 / SRRC 167) protein is Cytochrome P450 monooxygenase flvC.